A 249-amino-acid polypeptide reads, in one-letter code: Small ribosomal subunit protein uS2 (249 aa).

Belongs to the universal ribosomal protein uS2 family.

In Bordetella parapertussis (strain 12822 / ATCC BAA-587 / NCTC 13253), this protein is Small ribosomal subunit protein uS2.